A 311-amino-acid polypeptide reads, in one-letter code: Triacylglycerol lipase (311 aa).

An N-terminal signal peptide occupies residues 1-26; it reads MKKKSLLPLGLAIGLASLAASPLIQA. In terms of domain architecture, AB hydrolase-1 spans 35–280; it reads PIVLAHGMLG…DNYRMNHLDE (246 aa). Met-42 is a substrate binding site. Ser-108 serves as the catalytic Nucleophile. His-109 is a binding site for substrate. A disulfide bridge links Cys-209 with Cys-261. Residue Asp-235 coordinates Ca(2+). Residues Asp-255 and His-277 each act as charge relay system in the active site. 3 residues coordinate Ca(2+): Asp-279, Gln-283, and Leu-287.

Belongs to the AB hydrolase superfamily. Pseudomonas lipase family. As to quaternary structure, monomer. It depends on Ca(2+) as a cofactor.

It is found in the secreted. It carries out the reaction a triacylglycerol + H2O = a diacylglycerol + a fatty acid + H(+). In terms of biological role, catalyzes the hydrolysis of triacylglycerol. Also able to catalyze, in anhydrous organic solvents, intramolecular transesterification of omega-hydroxyfatty acid esters to form macrocyclic lactones. This biosynthesis is dependent on the chain length of the substrates, and the formation of monomer lactone is maximum with methyl 18-hydroxyoctadecanoate. With shorter substrates, monomer lactone decreases and the formation of diolide (dimer lactone) increases. In Pseudomonas sp. (strain 109), this protein is Triacylglycerol lipase.